The chain runs to 239 residues: Cyclo(L-leucyl-L-phenylalanyl) synthase (239 aa).

Ser-37 acts as the Nucleophile in catalysis. Residues Asn-40, 178-182 (YVLAE), and Tyr-202 contribute to the substrate site.

Belongs to the CDPS family. Monomer.

It catalyses the reaction L-phenylalanyl-tRNA(Phe) + L-leucyl-tRNA(Leu) = cyclo(L-phenylalanyl-L-leucyl) + tRNA(Phe) + tRNA(Leu) + H(+). Involved in the biosynthesis of albonoursin (cyclo[(alpha,beta-dehydro-Phe)-(alpha,beta-dehydro-Leu)]), an antibacterial peptide. It uses activated amino acids in the form of aminoacyl-tRNAs (aa-tRNAs) as substrates to catalyze the ATP-independent formation of cyclodipeptides which are intermediates in diketopiperazine (DKP) biosynthetic pathways. Catalyzes the formation of cyclo(L-Phe-L-Leu) (cFL) as major products from L-L-phenylalanyl-tRNA(Phe) and L-leucyl-tRNA(Leu). AlbC can also incorporate various nonpolar residues, such as L-phenylalanine, L-leucine, L-tyrosine and L-methionine, and to a much lesser extent L-alanine and L-valine, into cyclodipeptides. Indeed, ten possible cyclodipeptides composed of L-phenylalanine, L-leucine, L-tyrosine and L-methionine are all synthesized to detectable amounts by AlbC. The protein is Cyclo(L-leucyl-L-phenylalanyl) synthase (albC) of Streptomyces noursei (Streptomyces albulus).